Consider the following 78-residue polypeptide: DNA-directed RNA polymerase subunit Rpo5 (78 aa).

The protein belongs to the archaeal Rpo5/eukaryotic RPB5 RNA polymerase subunit family. In terms of assembly, part of the RNA polymerase complex.

The protein localises to the cytoplasm. The enzyme catalyses RNA(n) + a ribonucleoside 5'-triphosphate = RNA(n+1) + diphosphate. DNA-dependent RNA polymerase (RNAP) catalyzes the transcription of DNA into RNA using the four ribonucleoside triphosphates as substrates. This chain is DNA-directed RNA polymerase subunit Rpo5, found in Methanococcus maripaludis (strain C7 / ATCC BAA-1331).